The primary structure comprises 275 residues: Diaminopimelate epimerase (275 aa).

Substrate is bound by residues N12, Q45, and N65. C74 (proton donor) is an active-site residue. Substrate contacts are provided by residues G75 to N76, N158, N191, and E209 to R210. Residue C218 is the Proton acceptor of the active site. G219–T220 is a binding site for substrate.

Belongs to the diaminopimelate epimerase family. In terms of assembly, homodimer.

The protein resides in the cytoplasm. It catalyses the reaction (2S,6S)-2,6-diaminopimelate = meso-2,6-diaminopimelate. The protein operates within amino-acid biosynthesis; L-lysine biosynthesis via DAP pathway; DL-2,6-diaminopimelate from LL-2,6-diaminopimelate: step 1/1. Its function is as follows. Catalyzes the stereoinversion of LL-2,6-diaminopimelate (L,L-DAP) to meso-diaminopimelate (meso-DAP), a precursor of L-lysine and an essential component of the bacterial peptidoglycan. The polypeptide is Diaminopimelate epimerase (Shewanella sp. (strain MR-4)).